The following is an 852-amino-acid chain: DNA double-strand break repair Rad50 ATPase (852 aa).

ATP contacts are provided by Asn32, Gly33, Ala34, Gly35, Lys36, Ser37, Ser38, Arg53, Tyr54, Asp59, Val61, and Arg63. Ser37 contributes to the Mg(2+) binding site. Mg(2+) is bound at residue Gln142. 2 coiled-coil regions span residues 155-345 (EITE…EELD) and 389-427 (LLSIEKTENETKNELEKLLDELSILKKDHMKWLAYQIAS). The Zinc-hook domain maps to 389 to 488 (LLSIEKTENE…SLSSLIEDLL (100 aa)). Cys435 and Cys438 together coordinate Zn(2+). Coiled coils occupy residues 460 to 488 (DQKRSELENTLNVLKERKKSLSSLIEDLL) and 534 to 711 (KIEE…LFDK). Asp797 serves as a coordination point for Mg(2+).

The protein belongs to the SMC family. RAD50 subfamily. Homodimer. Forms a complex with Mre11. Zn(2+) is required as a cofactor.

It catalyses the reaction ATP + H2O = ADP + phosphate + H(+). Its function is as follows. Involved in DNA double-strand break repair (DSBR). The Rad50/Mre11 complex possesses single-strand endonuclease activity and ATP-dependent double-strand-specific 3'-5' exonuclease activity. Rad50 provides an ATP-dependent control of Mre11 by positioning DNA ends into the Mre11 active site: ATP-binding induces a large structural change from an open form with accessible Mre11 nuclease sites into a closed form. This is DNA double-strand break repair Rad50 ATPase from Thermotoga maritima (strain ATCC 43589 / DSM 3109 / JCM 10099 / NBRC 100826 / MSB8).